The primary structure comprises 157 residues: Transcription elongation factor GreA (157 aa).

The stretch at 12-74 (LKKLEEELEY…TLEAMLKNAK (63 aa)) forms a coiled coil.

It belongs to the GreA/GreB family.

Necessary for efficient RNA polymerase transcription elongation past template-encoded arresting sites. The arresting sites in DNA have the property of trapping a certain fraction of elongating RNA polymerases that pass through, resulting in locked ternary complexes. Cleavage of the nascent transcript by cleavage factors such as GreA or GreB allows the resumption of elongation from the new 3'terminus. GreA releases sequences of 2 to 3 nucleotides. In Thermoanaerobacter pseudethanolicus (strain ATCC 33223 / 39E) (Clostridium thermohydrosulfuricum), this protein is Transcription elongation factor GreA.